We begin with the raw amino-acid sequence, 6359 residues long: Bacitracin synthase 3 (6359 aa).

The tract at residues Leu-461 to Ser-1034 is domain 1 (isoleucine-activating). The span at Val-941 to Ala-953 shows a compositional bias: basic and acidic residues. The segment at Val-941 to Pro-962 is disordered. 5 Carrier domains span residues Ala-961–Lys-1036, Ala-1993–Ser-2067, Ala-3497–Lys-3572, Pro-4539–Ser-4613, and Pro-6047–Gln-6122. O-(pantetheine 4'-phosphoryl)serine occurs at positions 996, 2028, and 3532. The interval Phe-1517–Lys-2064 is domain 2 (D-phenylalanine-activating). A domain 3 (histidine-activating) region spans residues Asn-2999 to Ser-3570. Positions Glu-4047–Glu-4612 are domain 4 (D-aspartic acid-activating). The interval Ile-4521 to Thr-4544 is disordered. Over residues Pro-4531–Thr-4544 the composition is skewed to basic and acidic residues. Ser-4574 and Ser-6082 each carry O-(pantetheine 4'-phosphoryl)serine. Positions Ile-5549–Thr-6129 are domain 5 (asparagine-activating).

The protein belongs to the ATP-dependent AMP-binding enzyme family. Large multienzyme complex of BA1, BA2 and BA3. It depends on pantetheine 4'-phosphate as a cofactor.

It catalyses the reaction L-aspartate = D-aspartate. It carries out the reaction L-phenylalanine + ATP + H2O = D-phenylalanine + AMP + diphosphate + H(+). Its pathway is antibiotic biosynthesis; bacitracin biosynthesis. Its function is as follows. Induces peptide synthesis, activates and incorporates five amino acids, forms a thiazoline ring between the first two amino acids and incorporates a D-glutamine in the fourth position. This Bacillus licheniformis protein is Bacitracin synthase 3 (bacC).